The chain runs to 248 residues: Peptidyl-tRNA hydrolase (248 aa).

Y14 is a tRNA binding site. Catalysis depends on H19, which acts as the Proton acceptor. 3 residues coordinate tRNA: F64, N66, and N112. The interval 190 to 248 is disordered; the sequence is PRSSTGEASKGRKKAQKSEPGVAKTPAKAATPEAPAAGDIPAAPEDSRSPMQKLLDKFK. Positions 212 to 226 are enriched in low complexity; that stretch reads AKTPAKAATPEAPAA.

This sequence belongs to the PTH family. In terms of assembly, monomer.

The protein localises to the cytoplasm. The catalysed reaction is an N-acyl-L-alpha-aminoacyl-tRNA + H2O = an N-acyl-L-amino acid + a tRNA + H(+). Its function is as follows. Hydrolyzes ribosome-free peptidyl-tRNAs (with 1 or more amino acids incorporated), which drop off the ribosome during protein synthesis, or as a result of ribosome stalling. Catalyzes the release of premature peptidyl moieties from peptidyl-tRNA molecules trapped in stalled 50S ribosomal subunits, and thus maintains levels of free tRNAs and 50S ribosomes. The chain is Peptidyl-tRNA hydrolase from Ruegeria sp. (strain TM1040) (Silicibacter sp.).